Consider the following 162-residue polypeptide: Nucleotide-binding protein SAV_4896 (162 aa).

Belongs to the YajQ family.

In terms of biological role, nucleotide-binding protein. The protein is Nucleotide-binding protein SAV_4896 of Streptomyces avermitilis (strain ATCC 31267 / DSM 46492 / JCM 5070 / NBRC 14893 / NCIMB 12804 / NRRL 8165 / MA-4680).